The primary structure comprises 139 residues: Ribonuclease P protein component (139 aa).

The disordered stretch occupies residues 120 to 139 (KPTTGVEYSPKNEKCESVLP). Residues 129–139 (PKNEKCESVLP) show a composition bias toward basic and acidic residues.

This sequence belongs to the RnpA family. Consists of a catalytic RNA component (M1 or rnpB) and a protein subunit.

It carries out the reaction Endonucleolytic cleavage of RNA, removing 5'-extranucleotides from tRNA precursor.. Functionally, RNaseP catalyzes the removal of the 5'-leader sequence from pre-tRNA to produce the mature 5'-terminus. It can also cleave other RNA substrates such as 4.5S RNA. The protein component plays an auxiliary but essential role in vivo by binding to the 5'-leader sequence and broadening the substrate specificity of the ribozyme. The protein is Ribonuclease P protein component of Chlamydia caviae (strain ATCC VR-813 / DSM 19441 / 03DC25 / GPIC) (Chlamydophila caviae).